We begin with the raw amino-acid sequence, 163 residues long: RNA pyrophosphohydrolase (163 aa).

Positions 6–149 (GYRLNVGIVI…KRDVYRQVMK (144 aa)) constitute a Nudix hydrolase domain. Positions 38–59 (GGIHLTESPEEAMYRELFEELG) match the Nudix box motif.

Belongs to the Nudix hydrolase family. RppH subfamily. Requires a divalent metal cation as cofactor.

In terms of biological role, accelerates the degradation of transcripts by removing pyrophosphate from the 5'-end of triphosphorylated RNA, leading to a more labile monophosphorylated state that can stimulate subsequent ribonuclease cleavage. The chain is RNA pyrophosphohydrolase from Hamiltonella defensa subsp. Acyrthosiphon pisum (strain 5AT).